A 20-amino-acid polypeptide reads, in one-letter code: Chrysophsin-3 (20 aa).

At His-20 the chain carries Histidine amide.

As to expression, gill.

It is found in the secreted. Functionally, has antibacterial activity against Gram-positive bacteria B.subtilis ATCC 6633, L.garvieae ATCC 49156 and S.iniae F-8502, and Gram-negative bacteria E.coli WT-2, V.anguillarum ATCC 19264, V.penaeicida KHA, V.harveyi ATCC 14126, V.vulnificus ATCC 33148, A.salmonicida NCMB 1102 and P.putida ATCC 12633. Has hemolytic activity against human red blood cells. Seems to disrupt the membranes by adopting an alpha helical conformation. May play a significant role in innate host defense. This chain is Chrysophsin-3, found in Pagrus major (Red sea bream).